The following is a 201-amino-acid chain: Recombination protein RecR (201 aa).

The C4-type zinc finger occupies 60–75 (CQVCGNVDVRDPCTVC). The Toprim domain occupies 83–178 (SVLVVVAEVA…KVTRLAHGVP (96 aa)).

This sequence belongs to the RecR family.

May play a role in DNA repair. It seems to be involved in an RecBC-independent recombinational process of DNA repair. It may act with RecF and RecO. This Azorhizobium caulinodans (strain ATCC 43989 / DSM 5975 / JCM 20966 / LMG 6465 / NBRC 14845 / NCIMB 13405 / ORS 571) protein is Recombination protein RecR.